We begin with the raw amino-acid sequence, 678 residues long: MTNVPETIRKRVDSLRATLEDHNYYYYVQDDPRIPDAEYDRLFRELQKLEAEHPELATEDSPTRRVGSSAETSFEEVIHRLPMLSLDNAFSEDELRDFDRRVRDRLGADGAIEYVCEPKLDGLAVSLHYENGTLTRAATRGDGYTGEDITANIRTIPSVPLKLRGSGYPDLVEVRGEVYMPRAGFEKLNERLAEQGEKTFVNPRNAAAGSLRQKKSTVTARRPLELCAYSMAVTDESVLPETHWDSLQLVRDWGFRINPEMRKAEGVEACLDAYNELMAKRDSLPYEIDGIVFKVNRLDLQQELGFVSRAPRWAIAHKFPAQEELTIIEDVEFQVGRTGAVTPVARLKPVFVGGVTVSNATLHNMDEIRRLDVHIGDTVFIRRAGDVIPQVVKVVPEKRPAEAPMVEMPEHCPVCGSDIVQIEGEAVARCSGGLYCPAQRKEAIRHYASRKAMDIEGLGDRLIEVLVDEGMVSTVADLYRLTKFQIASLERMGDKSAANLIAAIDRSREPVLWRFLYALGIREVGEATAKGLAAHFGTLEAISAADEETLQTVPDVGPIVAGHIRSFFDQPHNQETLAALKEAGVTWQEEQVLSADEQPLNGQTWVLTGTLSGMTRDQAKEKLEQLGAKVAGSVSKKTACVVAGEAAGSKLAKAEQLGVPVLDEEGLANLLREHGIEV.

Residues 36–40, 85–86, and E117 each bind NAD(+); these read DAEYD and SL. K119 functions as the N6-AMP-lysine intermediate in the catalytic mechanism. Positions 140, 177, 294, and 318 each coordinate NAD(+). The Zn(2+) site is built by C412, C415, C430, and C436. The BRCT domain maps to 595–678; sequence ADEQPLNGQT…NLLREHGIEV (84 aa).

Belongs to the NAD-dependent DNA ligase family. LigA subfamily. It depends on Mg(2+) as a cofactor. The cofactor is Mn(2+).

The enzyme catalyses NAD(+) + (deoxyribonucleotide)n-3'-hydroxyl + 5'-phospho-(deoxyribonucleotide)m = (deoxyribonucleotide)n+m + AMP + beta-nicotinamide D-nucleotide.. Its function is as follows. DNA ligase that catalyzes the formation of phosphodiester linkages between 5'-phosphoryl and 3'-hydroxyl groups in double-stranded DNA using NAD as a coenzyme and as the energy source for the reaction. It is essential for DNA replication and repair of damaged DNA. The protein is DNA ligase of Marinobacter nauticus (strain ATCC 700491 / DSM 11845 / VT8) (Marinobacter aquaeolei).